A 359-amino-acid chain; its full sequence is Peptide chain release factor 1 (359 aa).

Glutamine 238 carries the N5-methylglutamine modification.

It belongs to the prokaryotic/mitochondrial release factor family. In terms of processing, methylated by PrmC. Methylation increases the termination efficiency of RF1.

The protein resides in the cytoplasm. Functionally, peptide chain release factor 1 directs the termination of translation in response to the peptide chain termination codons UAG and UAA. This Mycoplasmopsis pulmonis (strain UAB CTIP) (Mycoplasma pulmonis) protein is Peptide chain release factor 1.